We begin with the raw amino-acid sequence, 332 residues long: uncharacterized protein (332 aa).

Positions 159–256 (PLEISGRGGN…PRPHPWGPGP (98 aa)) are disordered. The span at 201-231 (RPPSPRPPSPRPPHPRPPSPRPPHPRPPSPR) shows a compositional bias: pro residues.

The protein localises to the virion. This is an uncharacterized protein from Acanthamoeba polyphaga (Amoeba).